A 208-amino-acid polypeptide reads, in one-letter code: MSSLGRLHLITDARAGRNPLTVVQAALSVARTELVVQVRVADDATDRQAYDLARRVIALCARYDATCLVNDRLHVALAVGAAGGHVGADDLPVGAARAVLGSAAVLGVTARDADTAVEAVAAGASYLGVGPVHPTTSKEGLPPAIGVAGVGVVAAAVSVPVIAIGAVTAADVPVLRAAGAYGVAVIGALSHAADPAGATAALLEALTW.

Residues 37 to 39 (QVR) and Asn70 each bind 4-amino-2-methyl-5-(diphosphooxymethyl)pyrimidine. Mg(2+) contacts are provided by Asp71 and Asp90. Thr109 contacts 4-amino-2-methyl-5-(diphosphooxymethyl)pyrimidine. 135-137 (TTS) is a binding site for 2-[(2R,5Z)-2-carboxy-4-methylthiazol-5(2H)-ylidene]ethyl phosphate. Lys138 serves as a coordination point for 4-amino-2-methyl-5-(diphosphooxymethyl)pyrimidine. Ala166 is a 2-[(2R,5Z)-2-carboxy-4-methylthiazol-5(2H)-ylidene]ethyl phosphate binding site.

The protein belongs to the thiamine-phosphate synthase family. It depends on Mg(2+) as a cofactor.

It catalyses the reaction 2-[(2R,5Z)-2-carboxy-4-methylthiazol-5(2H)-ylidene]ethyl phosphate + 4-amino-2-methyl-5-(diphosphooxymethyl)pyrimidine + 2 H(+) = thiamine phosphate + CO2 + diphosphate. The enzyme catalyses 2-(2-carboxy-4-methylthiazol-5-yl)ethyl phosphate + 4-amino-2-methyl-5-(diphosphooxymethyl)pyrimidine + 2 H(+) = thiamine phosphate + CO2 + diphosphate. The catalysed reaction is 4-methyl-5-(2-phosphooxyethyl)-thiazole + 4-amino-2-methyl-5-(diphosphooxymethyl)pyrimidine + H(+) = thiamine phosphate + diphosphate. It participates in cofactor biosynthesis; thiamine diphosphate biosynthesis; thiamine phosphate from 4-amino-2-methyl-5-diphosphomethylpyrimidine and 4-methyl-5-(2-phosphoethyl)-thiazole: step 1/1. In terms of biological role, condenses 4-methyl-5-(beta-hydroxyethyl)thiazole monophosphate (THZ-P) and 2-methyl-4-amino-5-hydroxymethyl pyrimidine pyrophosphate (HMP-PP) to form thiamine monophosphate (TMP). The sequence is that of Thiamine-phosphate synthase from Salinispora tropica (strain ATCC BAA-916 / DSM 44818 / JCM 13857 / NBRC 105044 / CNB-440).